A 364-amino-acid polypeptide reads, in one-letter code: Histidinol-phosphate aminotransferase 1 (364 aa).

An N6-(pyridoxal phosphate)lysine modification is found at K211.

Belongs to the class-II pyridoxal-phosphate-dependent aminotransferase family. Histidinol-phosphate aminotransferase subfamily. In terms of assembly, homodimer. Requires pyridoxal 5'-phosphate as cofactor.

The enzyme catalyses L-histidinol phosphate + 2-oxoglutarate = 3-(imidazol-4-yl)-2-oxopropyl phosphate + L-glutamate. Its pathway is amino-acid biosynthesis; L-histidine biosynthesis; L-histidine from 5-phospho-alpha-D-ribose 1-diphosphate: step 7/9. This chain is Histidinol-phosphate aminotransferase 1, found in Legionella pneumophila (strain Lens).